The primary structure comprises 453 residues: Protein amnionless (453 aa).

The N-terminal stretch at 1–19 is a signal peptide; sequence MGVLGRVLLWLQLCALTQA. The Extracellular portion of the chain corresponds to 20–357; the sequence is VSKLWVPNTD…ESGAHVWGSS (338 aa). Asn-35 is a glycosylation site (N-linked (GlcNAc...) asparagine). 6 disulfide bridges follow: Cys-43–Cys-96, Cys-137–Cys-213, Cys-205–Cys-211, Cys-223–Cys-249, Cys-234–Cys-250, and Cys-239–Cys-253. The tract at residues 67–87 is interaction with CUBN; the sequence is SDMLLPLDGELVLASGAGFGV. The VWFC domain maps to 202–254; it reads PEDCADPSGCVCGNAEAQPWICAALLQPLGGRCPQAACHSALRPQGQCCDLCG. The chain crosses the membrane as a helical span at residues 358-378; sequence AAGLAGGVAAAVLLALLVLLV. Residues 379-453 are Cytoplasmic-facing; the sequence is APPLLRRAGR…PLFAGAEAEA (75 aa).

Interacts (via extracellular region) with CUBN/cubilin, giving rise to a huge complex containing one AMN chain and three CUBN chains. N-glycosylated. In terms of processing, a soluble form arises by proteolytic removal of the membrane anchor. As to expression, detected in proximal tubules in the kidney cortex (at protein level). Long isoforms are highly expressed in small intestine, colon and kidney (renal proximal tubule epithelial cells). Shorter isoforms are detected at lower levels in testis, thymus and peripheral blood leukocytes.

The protein localises to the apical cell membrane. Its subcellular location is the cell membrane. The protein resides in the endosome membrane. It localises to the membrane. It is found in the coated pit. The protein localises to the secreted. Its function is as follows. Membrane-bound component of the endocytic receptor formed by AMN and CUBN. Required for normal CUBN glycosylation and trafficking to the cell surface. The complex formed by AMN and CUBN is required for efficient absorption of vitamin B12. Required for normal CUBN-mediated protein transport in the kidney. The chain is Protein amnionless (AMN) from Homo sapiens (Human).